Reading from the N-terminus, the 116-residue chain is Nitrogenase-stabilizing/protective protein NifW (116 aa).

It belongs to the NifW family. As to quaternary structure, homotrimer; associates with NifD.

Its function is as follows. May protect the nitrogenase Fe-Mo protein from oxidative damage. The chain is Nitrogenase-stabilizing/protective protein NifW from Rhodopseudomonas palustris (strain ATCC BAA-98 / CGA009).